Here is a 192-residue protein sequence, read N- to C-terminus: Transcription termination/antitermination protein NusG (192 aa).

The 29-residue stretch at 140-168 (VGEVVTVTDGPFETFMGTVEEIDKERNRL) folds into the KOW domain.

It belongs to the NusG family.

In terms of biological role, participates in transcription elongation, termination and antitermination. In Rickettsia typhi (strain ATCC VR-144 / Wilmington), this protein is Transcription termination/antitermination protein NusG.